The primary structure comprises 91 residues: MAANATTNPSQLLPLELVDKCIGSRIHIVMKSDKEIVGTLLGFDDFVNMVLEDVTEFEITPEGRRITKLDQILLNGNNITMLVPGGEGPEV.

N-acetylalanine is present on Ala-2. Positions 13–88 (LPLELVDKCI…ITMLVPGGEG (76 aa)) constitute a Sm domain.

The protein belongs to the snRNP Sm proteins family. Component of the precatalytic spliceosome (spliceosome B complex). Component of the U4/U6-U5 tri-snRNP complex, a building block of the precatalytic spliceosome (spliceosome B complex). The U4/U6-U5 tri-snRNP complex is composed of the U4, U6 and U5 snRNAs and at least PRPF3, PRPF4, PRPF6, PRPF8, PRPF31, SNRNP200, TXNL4A, SNRNP40, SNRPB, SNRPD1, SNRPD2, SNRPD3, SNRPE, SNRPF, SNRPG, DDX23, CD2BP2, PPIH, SNU13, EFTUD2, SART1 and USP39, plus LSM2, LSM3, LSM4, LSM5, LSM6, LSM7 and LSM8. LSM2, LSM3, LSM4, LSM5, LSM6, LSM7 and LSM8 form a heptameric, ring-shaped subcomplex (the LSM2-8 complex) that is part of the U4/U6-U5 tri-snRNP complex and the precatalytic spliceosome.

It is found in the nucleus. Its function is as follows. Plays a role in pre-mRNA splicing as component of the U4/U6-U5 tri-snRNP complex that is involved in spliceosome assembly, and as component of the precatalytic spliceosome (spliceosome B complex). The heptameric LSM2-8 complex binds specifically to the 3'-terminal U-tract of U6 snRNA. This chain is U6 snRNA-associated Sm-like protein LSm5 (LSM5), found in Bos taurus (Bovine).